Consider the following 78-residue polypeptide: Protein SlyX homolog (78 aa).

It belongs to the SlyX family.

The sequence is that of Protein SlyX homolog from Xylella fastidiosa (strain 9a5c).